The sequence spans 304 residues: Protein YIF1B (304 aa).

The Cytoplasmic portion of the chain corresponds to 1–146 (MMEYPNQSGF…APRFDINAPD (146 aa)). The interval 21-54 (MRGSAMEPSDPTQLFDDTSSGVNKHEPGRVGKSP) is disordered. Residues 30 to 42 (DPTQLFDDTSSGV) are compositionally biased toward polar residues. Residues 147–167 (LYIPVMGFITYVLVAGLALGT) form a helical membrane-spanning segment. Over 168-182 (QNRFSPEILGIQASS) the chain is Extracellular. The chain crosses the membrane as a helical span at residues 183–203 (ALVWLIIEVLAVLLSLYLVTV). Residues 204–212 (NTDLTTIDL) are Cytoplasmic-facing. A helical transmembrane segment spans residues 213-233 (VAFSGYKYVGMIVGVVAGLLF). Residues 234–236 (GRT) are Extracellular-facing. A helical membrane pass occupies residues 237 to 257 (GYYLALLWFCASIFVFTIRTL). Over 258–282 (RLKILSEAAAEGRLVRGTKNQLRMY) the chain is Cytoplasmic. Residues 283 to 303 (LTMAIAAAQPVFMYWLTFHLV) form a helical membrane-spanning segment. Arg304 is a topological domain (extracellular).

The protein belongs to the YIF1 family.

It is found in the endoplasmic reticulum membrane. Its subcellular location is the golgi apparatus membrane. The protein resides in the endoplasmic reticulum-Golgi intermediate compartment membrane. Functionally, functions in endoplasmic reticulum to Golgi vesicle-mediated transport and regulates the proper organization of the endoplasmic reticulum and the Golgi. Plays a key role in targeting to neuronal dendrites receptors such as HTR1A. Plays also a role in primary cilium and sperm flagellum assembly probably through protein transport to these compartments. This Danio rerio (Zebrafish) protein is Protein YIF1B (yif1b).